Consider the following 217-residue polypeptide: 3,4-dihydroxy-2-butanone 4-phosphate synthase (217 aa).

D-ribulose 5-phosphate is bound by residues 37–38 (RE), D42, 150–154 (RRGHT), and E174. E38 is a Mg(2+) binding site. H153 is a Mg(2+) binding site.

This sequence belongs to the DHBP synthase family. As to quaternary structure, homodimer. Requires Mg(2+) as cofactor. Mn(2+) is required as a cofactor.

It catalyses the reaction D-ribulose 5-phosphate = (2S)-2-hydroxy-3-oxobutyl phosphate + formate + H(+). It functions in the pathway cofactor biosynthesis; riboflavin biosynthesis; 2-hydroxy-3-oxobutyl phosphate from D-ribulose 5-phosphate: step 1/1. Catalyzes the conversion of D-ribulose 5-phosphate to formate and 3,4-dihydroxy-2-butanone 4-phosphate. The protein is 3,4-dihydroxy-2-butanone 4-phosphate synthase of Shewanella sediminis (strain HAW-EB3).